Here is a 178-residue protein sequence, read N- to C-terminus: Mediator of RNA polymerase II transcription subunit 28 (178 aa).

Residues 1–25 form a disordered region; that stretch reads MAAPLGGMFSGQQPGPPQPPPGLLG. Residues 109-145 are a coiled coil; it reads QVIKEDVSELRNELQRKDALVQKHLTKLRHWQQVLED.

The protein belongs to the Mediator complex subunit 28 family. As to quaternary structure, component of the Mediator complex, which is composed of MED1, MED4, MED6, MED7, MED8, MED9, MED10, MED11, MED12, MED13, MED13L, MED14, MED15, MED16, MED17, MED18, MED19, MED20, MED21, MED22, MED23, MED24, MED25, MED26, MED27, MED29, MED30, MED31, CCNC, CDK8 and CDC2L6/CDK11. The MED12, MED13, CCNC and CDK8 subunits form a distinct module termed the CDK8 module. Mediator containing the CDK8 module is less active than Mediator lacking this module in supporting transcriptional activation. Individual preparations of the Mediator complex lacking one or more distinct subunits have been variously termed ARC, CRSP, DRIP, PC2, SMCC and TRAP. Forms a ternary complex with NF2/merlin and GRB2. Binds to actin.

It is found in the nucleus. It localises to the cytoplasm. The protein resides in the membrane. Its function is as follows. Component of the Mediator complex, a coactivator involved in the regulated transcription of nearly all RNA polymerase II-dependent genes. Mediator functions as a bridge to convey information from gene-specific regulatory proteins to the basal RNA polymerase II transcription machinery. Mediator is recruited to promoters by direct interactions with regulatory proteins and serves as a scaffold for the assembly of a functional preinitiation complex with RNA polymerase II and the general transcription factors. May be part of a complex containing NF2/merlin that participates in cellular signaling to the actin cytoskeleton downstream of tyrosine kinase signaling pathways. The protein is Mediator of RNA polymerase II transcription subunit 28 (MED28) of Bos taurus (Bovine).